Consider the following 289-residue polypeptide: MKDYLIKATANNGKIRAYAVQSTNTIEEARRRQDTFATASAALGRTITITAMMGAMLKGDDSITTKVMGNGPLGAIVADADADGHVRGYVTNPHVDFDLNDKGKLDVARAVGTEGNISVIKDLGLKDFFTGETPIVSGEISEDFTYYYATSEQLPSAVGAGVLVNPDHTILAAGGFIVQVMPGAEEEVINELEDQIQAIPAISSLIREGKSPEEILTQLFGEECLTIHEKMPIEFRCKCSKDRLAQAIIGLGNDEIQAMIEEDQGAEATCHFCNEKYHFTEEELEDLKQ.

2 disulfides stabilise this stretch: C237-C239 and C270-C273.

This sequence belongs to the HSP33 family. Post-translationally, under oxidizing conditions two disulfide bonds are formed involving the reactive cysteines. Under reducing conditions zinc is bound to the reactive cysteines and the protein is inactive.

Its subcellular location is the cytoplasm. Its function is as follows. Redox regulated molecular chaperone. Protects both thermally unfolding and oxidatively damaged proteins from irreversible aggregation. Plays an important role in the bacterial defense system toward oxidative stress. In Oceanobacillus iheyensis (strain DSM 14371 / CIP 107618 / JCM 11309 / KCTC 3954 / HTE831), this protein is 33 kDa chaperonin.